A 20-amino-acid polypeptide reads, in one-letter code: Equinatoxin-3 (20 aa).

The tract at residues 3–12 (AVAGAIIKGA) is plays an important role in the hemolytic activity. Positions 11-20 (GAALTFNVLQ) are N-terminal region.

The protein belongs to the actinoporin family. Sea anemone subfamily. Octamer or nonamer in membranes. Monomer in the soluble state.

It localises to the secreted. The protein localises to the nematocyst. The protein resides in the target cell membrane. Functionally, pore-forming protein that forms cations-selective hydrophilic pores of around 1 nm and causes cardiac stimulation and cytolysis. Pore formation is a multi-step process that involves specific recognition of membrane sphingomyelin (but neither cholesterol nor phosphatidylcholine) using aromatic rich region and adjacent phosphocholine (POC) binding site, firm binding to the membrane (mainly driven by hydrophobic interactions) accompanied by the transfer of the N-terminal region to the lipid-water interface and finally pore formation after oligomerization of monomers. Cytolytic effects include red blood cells hemolysis, platelet aggregation and lysis, cytotoxic and cytostatic effects on fibroblasts. Lethality in mammals has been ascribed to severe vasospasm of coronary vessels, cardiac arrhythmia, and inotropic effects. The chain is Equinatoxin-3 from Actinia equina (Beadlet anemone).